Consider the following 64-residue polypeptide: Large ribosomal subunit protein bL35 (64 aa).

Residues 1–45 show a composition bias toward basic residues; sequence MPKMKTHKGAAKRFKKTGKGKIKRRKAFKSHILTKKTPKRKRNLR. Residues 1–64 are disordered; sequence MPKMKTHKGA…EEKRIKRLLP (64 aa).

Belongs to the bacterial ribosomal protein bL35 family.

This Natranaerobius thermophilus (strain ATCC BAA-1301 / DSM 18059 / JW/NM-WN-LF) protein is Large ribosomal subunit protein bL35.